Here is a 975-residue protein sequence, read N- to C-terminus: Glycine dehydrogenase (decarboxylating) (975 aa).

Position 723 is an N6-(pyridoxal phosphate)lysine (Lys723).

The protein belongs to the GcvP family. The glycine cleavage system is composed of four proteins: P, T, L and H. The cofactor is pyridoxal 5'-phosphate.

The catalysed reaction is N(6)-[(R)-lipoyl]-L-lysyl-[glycine-cleavage complex H protein] + glycine + H(+) = N(6)-[(R)-S(8)-aminomethyldihydrolipoyl]-L-lysyl-[glycine-cleavage complex H protein] + CO2. The glycine cleavage system catalyzes the degradation of glycine. The P protein binds the alpha-amino group of glycine through its pyridoxal phosphate cofactor; CO(2) is released and the remaining methylamine moiety is then transferred to the lipoamide cofactor of the H protein. The protein is Glycine dehydrogenase (decarboxylating) of Burkholderia cenocepacia (strain HI2424).